Consider the following 777-residue polypeptide: Transcriptional regulator QRICH1 (777 aa).

M1 bears the N-acetylmethionine mark. Positions 6–48 (ENTISFEEYIRVKARSVPQHRMKEFLDSLASKGPEALQEFQQT) constitute a CARD domain. Disordered regions lie at residues 140–164 (IQGQ…SPSQ) and 219–240 (ALSP…VGTA). Residue S346 is modified to Phosphoserine. Residues K354 and K359 each participate in a glycyl lysine isopeptide (Lys-Gly) (interchain with G-Cter in SUMO2) cross-link. A disordered region spans residues 420–440 (QQQPQQQTAQEQTPPPQQQQQ). S465 is subject to Phosphoserine.

In terms of tissue distribution, expressed highly in prefrontal cortex, craniofacial area and near the limbs of mouse embryos. Expressed in heart, skeletal muscle, liver, kidney, lung, brain, spleen, intestine and growth plate in mice.

The protein localises to the nucleus. It localises to the cytoplasm. It is found in the cell membrane. In terms of biological role, transcriptional regulator that acts as a mediator of the integrated stress response (ISR) through transcriptional control of protein homeostasis under conditions of ER stress. Controls the outcome of the unfolded protein response (UPR), an ER-stress response pathway that either promotes recovery of ER homeostasis and cell survival, or triggers the terminal UPR which elicits programmed cell death when ER stress is prolonged and unresolved. ER stress induces QRICH1 translation by a ribosome translation re-initiation mechanism in response to EIF2S1/eIF-2-alpha phosphorylation, and stress-induced QRICH1 regulates a transcriptional program associated with protein translation, protein secretion-mediated proteotoxicity and cell death during the terminal UPR. May cooperate with ATF4 transcription factor signaling to regulate ER homeostasis which is critical for cell viability. Up-regulates CASP3/caspase-3 activity in epithelial cells under ER stress. Central regulator of proteotoxicity associated with ER stress-mediated inflammatory diseases in the intestines and liver. Involved in chondrocyte hypertrophy, a process required for normal longitudinal bone growth. The protein is Transcriptional regulator QRICH1 of Mus musculus (Mouse).